The primary structure comprises 67 residues: MNISYVNSNKTTSLPVELDALNNKDISYAKDFFLYIETQLKIAKDFLDLEKKYQVLLQVKFFTHLLI.

This is an uncharacterized protein from Escherichia coli (strain K12).